Consider the following 102-residue polypeptide: Monothiol glutaredoxin-S6 (102 aa).

Residues 1 to 101 (MESVRSLVED…AMLRRAGAIW (101 aa)) enclose the Glutaredoxin domain. Cysteine 21 provides a ligand contact to [2Fe-2S] cluster.

The protein belongs to the glutaredoxin family. CC-type subfamily.

Its subcellular location is the cytoplasm. Functionally, may only reduce GSH-thiol disulfides, but not protein disulfides. This chain is Monothiol glutaredoxin-S6 (GRXS6), found in Arabidopsis thaliana (Mouse-ear cress).